The primary structure comprises 225 residues: Probable septum site-determining protein MinC (225 aa).

It belongs to the MinC family. As to quaternary structure, interacts with MinD and FtsZ.

Its function is as follows. Cell division inhibitor that blocks the formation of polar Z ring septums. Rapidly oscillates between the poles of the cell to destabilize FtsZ filaments that have formed before they mature into polar Z rings. Prevents FtsZ polymerization. In Listeria welshimeri serovar 6b (strain ATCC 35897 / DSM 20650 / CCUG 15529 / CIP 8149 / NCTC 11857 / SLCC 5334 / V8), this protein is Probable septum site-determining protein MinC.